We begin with the raw amino-acid sequence, 150 residues long: UPF0178 protein PP_5221 (150 aa).

This sequence belongs to the UPF0178 family.

This chain is UPF0178 protein PP_5221, found in Pseudomonas putida (strain ATCC 47054 / DSM 6125 / CFBP 8728 / NCIMB 11950 / KT2440).